A 90-amino-acid polypeptide reads, in one-letter code: Small ribosomal subunit protein uS15c (90 aa).

This sequence belongs to the universal ribosomal protein uS15 family. As to quaternary structure, part of the 30S ribosomal subunit.

The protein localises to the plastid. The protein resides in the chloroplast. The sequence is that of Small ribosomal subunit protein uS15c (rps15-A) from Oryza nivara (Indian wild rice).